A 324-amino-acid polypeptide reads, in one-letter code: DGAT1/2-independent enzyme synthesizing storage lipids (324 aa).

Over 1–50 (MIDKNQTCGVGQDSVPYMICLIHILEEWFGVEQLEDYLNFANYLLWVFTP) the chain is Lumenal. Asn5 carries an N-linked (GlcNAc...) asparagine glycan. A helical transmembrane segment spans residues 51–71 (LILLILPYFTIFLLYLTIIFL). The Cytoplasmic portion of the chain corresponds to 72-125 (HIYKRKNVLKEAYSHNLWDGARKTVATLWDGHAAVWHGYEVHGMEKIPEDGPAL). The helical transmembrane segment at 126 to 146 (IIFYHGAIPIDFYYFMAKIFI) threads the bilayer. His130 is a catalytic residue. Residues 147-324 (HKGRTCRVVA…IMSALLERFH (178 aa)) lie on the Lumenal side of the membrane.

The protein belongs to the diacylglycerol acyltransferase family. Highly divergent.

The protein localises to the endoplasmic reticulum membrane. The enzyme catalyses a 1,2-diacylglycerol + a 1,2-diacyl-sn-glycero-3-phosphocholine = a triacylglycerol + a 1-acyl-sn-glycero-3-phosphocholine. It carries out the reaction a 1-O-alkyl-2-acyl-sn-glycero-3-phosphocholine + a 1,2-diacylglycerol = a 1-O-alkyl-sn-glycero-3-phosphocholine + a triacylglycerol. The catalysed reaction is a 2-acylglycerol + an acyl-CoA = a 1,2-diacylglycerol + CoA. It catalyses the reaction an acyl-CoA + a 1,2-diacyl-sn-glycerol = a triacyl-sn-glycerol + CoA. The enzyme catalyses 2-(9Z-octadecenoyl)-glycerol + (9Z)-octadecenoyl-CoA = 1,2-di-(9Z-octadecenoyl)-glycerol + CoA. It carries out the reaction 1,2-di-(9Z-octadecenoyl)-sn-glycerol + (9Z)-octadecenoyl-CoA = 1,2,3-tri-(9Z-octadecenoyl)-glycerol + CoA. Its activity is regulated as follows. Acyltransferase activity is specifically inhibited by TMX1 at the endoplasmic reticulum, restricting accumulation of triacylglycerol. Functionally, catalytic subunit of the alternative triglyceride biosynthesis pathway, which mediates formation of triacylglycerol from diacylglycerol and membrane phospholipids. Synthesizes triacylglycerol at the expense of membrane phospholipids, such as phosphatidylcholine (PC) and its ether-linked form (ePC), thereby altering the composition of membranes. The alternative triglyceride biosynthesis pathway is probably required to provide the energy required for rapid growth when fuel sources are limiting. It maintains mitochondrial function during periods of extracellular lipid starvation. Can also use acyl-CoA as donor: acts as a acyl-CoA:monoacylglycerol acyltransferase (MGAT), but also shows acyl-CoA:diacylglycerol acyltransferase (DGAT) activity. The sequence is that of DGAT1/2-independent enzyme synthesizing storage lipids from Homo sapiens (Human).